A 366-amino-acid polypeptide reads, in one-letter code: D-alanine--D-alanine ligase (366 aa).

Residues 144 to 347 (KRLLKDAGLK…YRELIENLIE (204 aa)) form the ATP-grasp domain. 174 to 229 (KEELGLPMFIKPANQGSSVGVHKVENEEQFYSAIKDAFQFDHKLLVEEAIVGREIE) contacts ATP. 3 residues coordinate Mg(2+): Asp301, Glu314, and Asn316.

It belongs to the D-alanine--D-alanine ligase family. Mg(2+) serves as cofactor. The cofactor is Mn(2+).

It is found in the cytoplasm. The enzyme catalyses 2 D-alanine + ATP = D-alanyl-D-alanine + ADP + phosphate + H(+). It functions in the pathway cell wall biogenesis; peptidoglycan biosynthesis. Functionally, cell wall formation. This Oceanobacillus iheyensis (strain DSM 14371 / CIP 107618 / JCM 11309 / KCTC 3954 / HTE831) protein is D-alanine--D-alanine ligase.